The sequence spans 161 residues: Nucleotide-binding protein Ssed_3443 (161 aa).

The protein belongs to the YajQ family.

Nucleotide-binding protein. This chain is Nucleotide-binding protein Ssed_3443, found in Shewanella sediminis (strain HAW-EB3).